The chain runs to 446 residues: Exodeoxyribonuclease 7 large subunit (446 aa).

Belongs to the XseA family. In terms of assembly, heterooligomer composed of large and small subunits.

The protein resides in the cytoplasm. It carries out the reaction Exonucleolytic cleavage in either 5'- to 3'- or 3'- to 5'-direction to yield nucleoside 5'-phosphates.. Its function is as follows. Bidirectionally degrades single-stranded DNA into large acid-insoluble oligonucleotides, which are then degraded further into small acid-soluble oligonucleotides. This Xanthomonas campestris pv. campestris (strain B100) protein is Exodeoxyribonuclease 7 large subunit.